The chain runs to 244 residues: Small ribosomal subunit protein eS4 (244 aa).

An S4 RNA-binding domain is found at 43-106; the sequence is LPLLLVVRDV…DENYLVLFDE (64 aa).

This sequence belongs to the eukaryotic ribosomal protein eS4 family.

This Methanococcus maripaludis (strain C5 / ATCC BAA-1333) protein is Small ribosomal subunit protein eS4.